Here is a 203-residue protein sequence, read N- to C-terminus: LexA repressor (203 aa).

The segment at residues 28 to 47 is a DNA-binding region (H-T-H motif); sequence IREIGDEFGITAKGAYDHLK. Active-site for autocatalytic cleavage activity residues include serine 127 and lysine 164.

The protein belongs to the peptidase S24 family. In terms of assembly, homodimer.

The catalysed reaction is Hydrolysis of Ala-|-Gly bond in repressor LexA.. Functionally, represses a number of genes involved in the response to DNA damage (SOS response), including recA and lexA. In the presence of single-stranded DNA, RecA interacts with LexA causing an autocatalytic cleavage which disrupts the DNA-binding part of LexA, leading to derepression of the SOS regulon and eventually DNA repair. This chain is LexA repressor, found in Leptospira interrogans serogroup Icterohaemorrhagiae serovar copenhageni (strain Fiocruz L1-130).